The chain runs to 406 residues: Tyrosine--tRNA ligase (406 aa).

Position 35 (Tyr-35) interacts with L-tyrosine. Positions 40-49 (ATSTSLHIGH) match the 'HIGH' region motif. Positions 166 and 170 each coordinate L-tyrosine. Residues 226–230 (KMGKS) carry the 'KMSKS' region motif. Residue Lys-229 participates in ATP binding. Residues 341–405 (ILLIDLMVLS…IGKKRILRVI (65 aa)) form the S4 RNA-binding domain.

This sequence belongs to the class-I aminoacyl-tRNA synthetase family. TyrS type 1 subfamily. As to quaternary structure, homodimer.

It is found in the cytoplasm. It carries out the reaction tRNA(Tyr) + L-tyrosine + ATP = L-tyrosyl-tRNA(Tyr) + AMP + diphosphate + H(+). In terms of biological role, catalyzes the attachment of tyrosine to tRNA(Tyr) in a two-step reaction: tyrosine is first activated by ATP to form Tyr-AMP and then transferred to the acceptor end of tRNA(Tyr). This is Tyrosine--tRNA ligase from Borrelia turicatae (strain 91E135).